The chain runs to 389 residues: Protein WALLS ARE THIN 1 (389 aa).

Helical transmembrane passes span 18–38, 49–69, 76–96, 111–131, 143–163, 198–218, 230–250, 266–286, 294–314, and 319–339; these read LQLHIAMLTLQFGYAGFHVVS, LVFPVYRNIIALLLLLPFAYF, PAITLNFLIQFFFLALIGITA, TFASSMQNSVPAITFLMAALL, GISKILGTALCVAGASVITLY, WTLGCIYLIGHCLSWSGWLVF, LSVTSYTCFFGIIQFLIIAAF, LFTILYAGIVASGIAFAVQIW, VFVAVYQPVQTLVVAIMASIA, and FYLGGIIGAVLIIAGLYFVLY. 2 EamA domains span residues 32–161 and 210–339; these read AGFH…SVIT and LSWS…FVLY. Residue serine 372 is modified to Phosphoserine.

It belongs to the drug/metabolite transporter (DMT) superfamily. Plant drug/metabolite exporter (P-DME) (TC 2.A.7.4) family. In terms of tissue distribution, mostly expressed in stems and hypocotyls, also present in seedlings, root, leaves, flowers and siliques. Ubiquitous, mostly expressed in vascular tissues and secondary wall-forming cells, including developing xylem vessels and fibers.

It is found in the vacuole membrane. Functionally, required for secondary wall formation in fibers, especially in short days conditions. Promotes indole metabolism and transport (e.g. tryptophan, neoglucobrassicin and auxin (indole-3-acetic acid)). May prevent salicylic-acid (SA) accumulation. This chain is Protein WALLS ARE THIN 1 (WAT1), found in Arabidopsis thaliana (Mouse-ear cress).